The primary structure comprises 192 residues: Adenylate kinase (192 aa).

10–18 (GVPGVGGTT) contacts ATP.

This sequence belongs to the archaeal adenylate kinase family. In terms of assembly, monomer.

The protein localises to the cytoplasm. It carries out the reaction AMP + ATP = 2 ADP. This is Adenylate kinase from Methanococcus maripaludis (strain C6 / ATCC BAA-1332).